Here is a 328-residue protein sequence, read N- to C-terminus: Formimidoylglutamase (328 aa).

The Mn(2+) site is built by His-133, Asp-159, His-161, Asp-163, Asp-253, and Asp-255.

Belongs to the arginase family. Requires Mn(2+) as cofactor.

It catalyses the reaction N-formimidoyl-L-glutamate + H2O = formamide + L-glutamate. The protein operates within amino-acid degradation; L-histidine degradation into L-glutamate; L-glutamate from N-formimidoyl-L-glutamate (hydrolase route): step 1/1. Its function is as follows. Catalyzes the conversion of N-formimidoyl-L-glutamate to L-glutamate and formamide. The protein is Formimidoylglutamase of Streptococcus pyogenes serotype M5 (strain Manfredo).